The sequence spans 792 residues: DEAD-box ATP-dependent RNA helicase 40 (792 aa).

The segment covering 1-16 has biased composition (low complexity); the sequence is MSAGTAPAAPRYAPDD. Disordered stretches follow at residues 1 to 25 and 44 to 118; these read MSAGTAPAAPRYAPDDPSLPKPWRG and TQYE…PLPA. Residues 17 to 51 enclose the WW domain; that stretch reads PSLPKPWRGLVDGTTGYLYYWNPETNITQYEKPLP. Residues 52–68 show a composition bias toward pro residues; it reads PEDQLPPPPPLPPPPPR. Basic and acidic residues-rich tracts occupy residues 70–80 and 88–108; these read GRGDRDRDRRD and PRRDHRDRDRDRDRRHDDHRS. A Q motif motif is present at residues 150-178; the sequence is TSFETGGFPPEILKEIQRAGFSSPTPIQA. Positions 181–355 constitute a Helicase ATP-binding domain; it reads WPIALQCQDV…EDLLVHPVQV (175 aa). Residue 194–201 coordinates ATP; that stretch reads AKTGSGKT. The DEAD box motif lies at 303 to 306; the sequence is DEAD. Residues 384–528 form the Helicase C-terminal domain; that stretch reads RLEQILRSQD…RVPRDLADMA (145 aa). A disordered region spans residues 523 to 792; that stretch reads DLADMASRGG…NATVQNGGDN (270 aa). 2 stretches are compositionally biased toward basic and acidic residues: residues 543 to 560 and 572 to 588; these read TRSDRGGSHSELDSRYGG and DSSRSSRRHDYGDDGRS. Basic residues-rich tracts occupy residues 589-599 and 609-654; these read RRSGRGRSRSR and RSPK…RRHE. Residues 668-708 are compositionally biased toward basic and acidic residues; it reads GHGERKRTPEADPSRNHTNHSDPKDDRHPEDGKVGKVDLDR. Polar residues predominate over residues 725 to 739; it reads GKTSRSVSPGNQVEG. Residues 764–777 are compositionally biased toward acidic residues; sequence DEEEGMIDEDGEIA.

The protein belongs to the DEAD box helicase family. DDX5/DBP2 subfamily.

The protein resides in the nucleus. The catalysed reaction is ATP + H2O = ADP + phosphate + H(+). Its function is as follows. ATP-dependent RNA helicase involved nonsense-mediated mRNA decay and ribosome biogenesis through rRNA processing. This chain is DEAD-box ATP-dependent RNA helicase 40, found in Oryza sativa subsp. japonica (Rice).